Here is a 114-residue protein sequence, read N- to C-terminus: uncharacterized protein (114 aa).

Transmembrane regions (helical) follow at residues 14 to 34 (VMSA…CFLL) and 75 to 95 (VIII…HPVA).

It is found in the membrane. This is an uncharacterized protein from Homo sapiens (Human).